The sequence spans 334 residues: O-methyltransferase SfmM3 (334 aa).

S-adenosyl-L-methionine contacts are provided by residues Asp190 and 216 to 218; that span reads GDF. Catalysis depends on His236, which acts as the Proton acceptor.

This sequence belongs to the class I-like SAM-binding methyltransferase superfamily. Cation-independent O-methyltransferase family. COMT subfamily.

The enzyme catalyses 5-hydroxy-3-methyl-L-tyrosine + S-adenosyl-L-methionine = 5-hydroxy-3-methyl-O-methyl-L-tyrosine + S-adenosyl-L-homocysteine + H(+). It participates in antibiotic biosynthesis. Functionally, O-methyltransferase that mediates the methylation of 3-hydroxy-5-methyl-L-tyrosine (3-OH-5-Me-Tyr) into 3-hydroxy-5-methyl-O-methyltyrosine (3-OH-5-Me-OMe-Tyr), a core structure of saframycin A, a potent antitumor antibiotic that belongs to the tetrahydroisoquinoline family. This chain is O-methyltransferase SfmM3, found in Streptomyces lavendulae.